The following is a 363-amino-acid chain: Dual-specificity RNA methyltransferase RlmN (363 aa).

E102 functions as the Proton acceptor in the catalytic mechanism. Residues 108–344 (EKKRSTLCVS…TTTIRKNRGE (237 aa)) enclose the Radical SAM core domain. An intrachain disulfide couples C115 to C350. 3 residues coordinate [4Fe-4S] cluster: C122, C126, and C129. S-adenosyl-L-methionine-binding positions include 174–175 (GE), S206, 228–230 (SLH), and N307. C350 functions as the S-methylcysteine intermediate in the catalytic mechanism.

It belongs to the radical SAM superfamily. RlmN family. [4Fe-4S] cluster serves as cofactor.

It localises to the cytoplasm. The catalysed reaction is adenosine(2503) in 23S rRNA + 2 reduced [2Fe-2S]-[ferredoxin] + 2 S-adenosyl-L-methionine = 2-methyladenosine(2503) in 23S rRNA + 5'-deoxyadenosine + L-methionine + 2 oxidized [2Fe-2S]-[ferredoxin] + S-adenosyl-L-homocysteine. It carries out the reaction adenosine(37) in tRNA + 2 reduced [2Fe-2S]-[ferredoxin] + 2 S-adenosyl-L-methionine = 2-methyladenosine(37) in tRNA + 5'-deoxyadenosine + L-methionine + 2 oxidized [2Fe-2S]-[ferredoxin] + S-adenosyl-L-homocysteine. In terms of biological role, specifically methylates position 2 of adenine 2503 in 23S rRNA and position 2 of adenine 37 in tRNAs. m2A2503 modification seems to play a crucial role in the proofreading step occurring at the peptidyl transferase center and thus would serve to optimize ribosomal fidelity. The polypeptide is Dual-specificity RNA methyltransferase RlmN (Buchnera aphidicola subsp. Acyrthosiphon pisum (strain APS) (Acyrthosiphon pisum symbiotic bacterium)).